The following is a 547-amino-acid chain: Apolipoprotein N-acyltransferase (547 aa).

Transmembrane regions (helical) follow at residues 31–51, 65–85, 89–109, 144–164, 181–201, and 215–235; these read PLPA…AAHA, GWLF…VSMH, GLAA…LALF, AACW…FPWL, LLGV…LAGL, and LAAG…QFSW. Residues 248–511 form the CN hydrolase domain; it reads VQGNVEQSQK…AGVLPVAVQG (264 aa). Glu292 acts as the Proton acceptor in catalysis. Residue Lys366 is part of the active site. Catalysis depends on Cys416, which acts as the Nucleophile.

This sequence belongs to the CN hydrolase family. Apolipoprotein N-acyltransferase subfamily.

The protein localises to the cell inner membrane. The enzyme catalyses N-terminal S-1,2-diacyl-sn-glyceryl-L-cysteinyl-[lipoprotein] + a glycerophospholipid = N-acyl-S-1,2-diacyl-sn-glyceryl-L-cysteinyl-[lipoprotein] + a 2-acyl-sn-glycero-3-phospholipid + H(+). It participates in protein modification; lipoprotein biosynthesis (N-acyl transfer). Functionally, catalyzes the phospholipid dependent N-acylation of the N-terminal cysteine of apolipoprotein, the last step in lipoprotein maturation. The protein is Apolipoprotein N-acyltransferase of Bordetella bronchiseptica (strain ATCC BAA-588 / NCTC 13252 / RB50) (Alcaligenes bronchisepticus).